Here is a 156-residue protein sequence, read N- to C-terminus: Putative pre-16S rRNA nuclease (156 aa).

The protein belongs to the YqgF nuclease family.

Its subcellular location is the cytoplasm. Its function is as follows. Could be a nuclease involved in processing of the 5'-end of pre-16S rRNA. This is Putative pre-16S rRNA nuclease from Ehrlichia canis (strain Jake).